Reading from the N-terminus, the 7094-residue chain is Replicase polyprotein 1ab (7094 aa).

The CoV Nsp1 globular domain maps to 54–196; the sequence is PENHVMVDCR…PWVMYLRKCG (143 aa). The BetaCoV Nsp1 C-terminal domain occupies 216–246; that stretch reads FKVEDAYDLVHDEPKGKFSKKAYALIRGYRG. Residues 250 to 519 form the CoV Nsp2 N-terminal domain; it reads LLYVDQYGCD…LICKALYLDY (270 aa). Positions 392, 397, 413, and 416 each coordinate Zn(2+). A C4 region spans residues 392-416; that stretch reads CEQDLCDFKGWVPGNMIDGFACTTC. The region spanning 524–713 is the CoV Nsp2 middle domain; sequence CGNLHQRELL…AQAFRSVAKV (190 aa). The 119-residue stretch at 733 to 851 folds into the CoV Nsp2 C-terminal domain; that stretch reads RRRICLSGSK…LDQAWRVPCA (119 aa). The Ubiquitin-like 1 domain occupies 853–966; it reads RRVTFKEQPT…LYCAFTAPED (114 aa). The 239-residue stretch at 1036 to 1274 folds into the Peptidase C16 1 domain; it reads DLESVIQDYE…IAQLYGSCIT (239 aa). Cys1074 acts as the For PL1-PRO activity in catalysis. Residues Cys1151, Cys1154, Cys1177, and Cys1179 each coordinate Zn(2+). The C4-type 1 zinc-finger motif lies at 1151–1179; that stretch reads CIKCDLALKLKGLDAMFFYGDVVSHVCKC. Active-site for PL1-PRO activity residues include His1225 and Asp1236. The 161-residue stretch at 1275-1435 folds into the Macro domain; sequence PNVCFVKGDI…LISKCQITAV (161 aa). In terms of domain architecture, DPUP spans 1491-1563; the sequence is DDARTFVQSN…VAQIKALFLD (73 aa). Residues 1562–1617 enclose the Ubiquitin-like 2 domain; sequence LDKVDILLTVDGVNFTNRFVPVGENFGKSLGNVFCDGVNVTKHKCDINYKGKVFFQ. Positions 1631–1892 constitute a Peptidase C16 2 domain; the sequence is SSFNFDQKEL…KIEYKPDLSQ (262 aa). Residue Cys1671 is the For PL2-PRO activity of the active site. Residues Cys1749, Cys1751, Cys1783, and Cys1785 each contribute to the Zn(2+) site. Residues 1749 to 1785 form a C4-type 2 zinc finger; the sequence is CKCGVKQEQRTGVDAVMHFGTLSREDLEIGYTVDCSC. Active-site for PL2-PRO activity residues include His1828 and Asp1842. The Nucleic acid-binding domain occupies 1906–2007; that stretch reads IKAQFKTFEK…TYFNRPLLVD (102 aa). Residues 2020-2169 form the G2M domain; that stretch reads DDGGDISESD…ADNKVIYTTE (150 aa). The next 3 helical transmembrane spans lie at 2138-2158, 2199-2219, and 2227-2247; these read ISAC…WIKI, ACII…NVIF, and IGFL…TFSL. Positions 2138–2385 are HD1; the sequence is ISACFNFIKW…ASFIKLFSLF (248 aa). One can recognise a 3Ecto domain in the interval 2235 to 2296; it reads GKIAQWIKST…AIDVVQYEAD (62 aa). Disulfide bonds link Cys2251-Cys2275 and Cys2266-Cys2272. The next 3 helical transmembrane spans lie at 2313–2333, 2343–2363, and 2365–2385; these read LIVS…LISI, LFML…ANML, and AHVF…FSLF. Residues 2383–2473 form a Y1 region; sequence SLFRHVAYGC…ELKRPIQPTD (91 aa). Residues 2383-2750 enclose the CoV Nsp3 Y domain; sequence SLFRHVAYGC…LTTPFSLKGG (368 aa). His2387, Cys2392, Cys2397, Cys2400, Cys2433, His2436, Cys2440, and Cys2443 together coordinate Zn(2+). Positions 2387–2400 are ZF1; it reads HVAYGCSKPGCLFC. Positions 2433–2443 are ZF2; it reads CSKHQWNCIDC. The Y2 stretch occupies residues 2474-2566; it reads VAYHTVTDVK…MVDKNLITTA (93 aa). The tract at residues 2474–2750 is coV-Y; it reads VAYHTVTDVK…LTTPFSLKGG (277 aa). The tract at residues 2567–2649 is Y3; sequence NTGTSVTETM…DSVMSAVSAG (83 aa). Residues 2650–2750 are Y4; the sequence is LELTDESCNN…LTTPFSLKGG (101 aa). Transmembrane regions (helical) follow at residues 2752-2772, 2824-2844, 3009-3029, 3031-3051, 3063-3083, 3090-3110, and 3115-3135; these read VFSY…IGLW, STFG…VAVV, VFDL…FLAL, ASSI…YYLI, IVFV…VFQV, VYAI…SVIM, and LVMY…SVVV. The HD2 stretch occupies residues 2752-3135; it reads VFSYFVYVCF…FCLLYISVVV (384 aa). The Nsp4C domain occupies 3149–3246; the sequence is LGTSVRSDGT…TASVSTSFLQ (98 aa). A Peptidase C30 domain is found at 3247–3549; it reads SGIVKMVNPT…YQQLAGIKLQ (303 aa). Catalysis depends on for 3CL-PRO activity residues His3287 and Cys3391. The next 7 helical transmembrane spans lie at 3558–3578, 3588–3608, 3614–3634, 3657–3677, 3684–3704, 3711–3731, and 3755–3775; these read GIVC…TAFV, TNML…MLLV, YLTM…YLVV, TYTD…FVTL, LFSF…WYMG, ILLM…LSMA, and IVLV…GLFS. An HD3 region spans residues 3558–3775; that stretch reads GIVCWIMAST…IISCYWGLFS (218 aa). Residues 3837–3925 enclose the RdRp Nsp7 cofactor domain; sequence SKLTDVKCAN…DYAKDNTVLQ (89 aa). Residues 3926–4122 enclose the RdRp Nsp8 cofactor domain; that stretch reads ALQSEFVNMA…HNEVSATVLQ (197 aa). The 110-residue stretch at 4123-4232 folds into the Nsp9 ssRNA-binding domain; that stretch reads NNELMPAKLK…GTISSTVRLQ (110 aa). Residues 4233 to 4370 form the ExoN/MTase coactivator domain; sequence AGTATEYASN…CVSTDTTVQS (138 aa). Zn(2+) contacts are provided by Cys4306, Cys4309, His4315, Cys4322, Cys4348, Cys4351, Cys4359, and Cys4361. Zinc fingers lie at residues 4306–4322 and 4348–4361; these read CIYC…DGLC and CQVC…SCSC. One can recognise a NiRAN domain in the interval 4375–4630; sequence FLNRVRGTSV…DCELYVNNAY (256 aa). Mn(2+) is bound by residues Asn4578 and Asp4587. Residues 4631–4729 enclose the Nsp12 Interface domain; sequence RLFDLVQYDF…MNMDVDTHRY (99 aa). 5 residues coordinate Zn(2+): His4660, Cys4666, Cys4671, Cys4675, and Cys4852. Residues 4730-5297 enclose the Nsp12 RNA-dependent RNA polymerase domain; it reads RLSLKDLLLY…NMYLRSAVMQ (568 aa). A rdRp Fingers N-ter region spans residues 4732-4946; it reads SLKDLLLYAA…HQKCLKSIAA (215 aa). Residues 4947–4985 form a rdRp Palm N-ter region; sequence TRGVPVVIGTTKFYGGWDDMLRRLIKDVDNPVLMGWDYP. The RdRp catalytic domain occupies 4977-5139; sequence PVLMGWDYPK…CYNSDYASKG (163 aa). A rdRp Fingers C-ter region spans residues 4986-5044; that stretch reads KCDRAMPNILRIVSSLVLARKHEACCSQSDRFYRLANECAQVLSEIVMCGGCYYVKPGG. The Zn(2+) site is built by His5007, Cys5010, and Cys5011. Residues 5045-5180 are rdRp Palm C-ter; that stretch reads TSSGDATTAF…NNGPHEFCSQ (136 aa). Catalysis depends on residues Ser5124, Asp5125, and Asp5126. The tract at residues 5181 to 5297 is rdRp Thumb; it reads HTMLVKMDGD…NMYLRSAVMQ (117 aa). The CV ZBD domain occupies 5298-5410; it reads SVGACVVCSS…DDFNRIASCK (113 aa). Residues Cys5302, Cys5305, Cys5313, Cys5316, Cys5323, Cys5326, His5330, His5336, Cys5347, Cys5352, Cys5369, and His5372 each contribute to the Zn(2+) site. In terms of domain architecture, (+)RNA virus helicase ATP-binding spans 5553 to 5734; sequence SVLETFQNNV…MCCLGPDIFL (182 aa). ATP is bound at residue 5578–5585; that stretch reads GPPGTGKS. The (+)RNA virus helicase C-terminal domain occupies 5735 to 5904; sequence GTCYRCPKEI…VETRVQCSTN (170 aa). The ExoN domain occupies 5971 to 6186; it reads LFITKEEAVK…RCLAVYDCFC (216 aa). Catalysis depends on residues Asp5989, Glu5991, and Glu6090. Cys6106, Cys6109, Cys6125, His6128, His6156, Cys6160, and His6163 together coordinate Zn(2+). Residues His6167 and Asp6172 contribute to the active site. Residue Cys6178 participates in Zn(2+) binding. An N7-MTase domain is found at 6195-6421; it reads YPIISNELSI…NLWNTFTKLQ (227 aa). 6230–6236 contacts S-adenosyl-L-methionine; sequence DIGNPKA. The interval 6308-6322 is gpppA-binding; that stretch reads CNGGSLYVNKHAFHT. Zn(2+) is bound by residues Cys6346, Cys6367, Cys6378, and His6381. A Nsp15 N-terminal oligomerization domain is found at 6422–6482; the sequence is SLENVVYNLV…NVAVELFAKR (61 aa). Residues 6483–6603 enclose the AV-Nsp11N/CoV-Nsp15M domain; it reads SIRHHPELKL…FAVRKEGQDV (121 aa). The NendoU domain maps to 6653-6792; that stretch reads TCRTDMEKDF…NDEKVMTFYP (140 aa). Active-site residues include His6683, His6698, Lys6738, Lys6841, Asp6925, Lys6965, and Glu6998. Residues 6797 to 7091 enclose the Nidovirus-type SAM-dependent 2'-O-MTase domain; the sequence is ASDWKPGYSM…KEVFVGDSLV (295 aa).

The protein belongs to the coronaviruses polyprotein 1ab family. In terms of assembly, interacts with host PHB and PHB2. As to quaternary structure, interacts with papain-like protease nsp3 and non-structural protein 6. Monomer. Homodimer. Only the homodimer shows catalytic activity. In terms of assembly, interacts with nsp8 and nsp12 to form the replication-transcription complex (RTC): nsp12, nsp7, two subunits of nsp8, and up to two subunits of nsp13. As to quaternary structure, interacts with nsp7, nsp13 and nsp12 to form the replication-transcription complex (RTC): nsp12, nsp7, two subunits of nsp8, and up to two subunits of nsp13. Interacts with nsp12. In terms of assembly, interacts with proofreading exoribonuclease nsp14 and 2'-O-methyltransferase nsp16; these interactions enhance nsp14 and nsp16 enzymatic activities. As to quaternary structure, interacts with nsp7 and nsp8 to form the replication-transcription complex (RTC): nsp12, nsp7, two subunits of nsp8, and up to two subunits of nsp13. Interacts with nsp9. Interacts with nsp8 to form the replication-transcription complex (RTC): nsp12, nsp7, two subunits of nsp8, and up to two subunits of nsp13. It depends on Mn(2+) as a cofactor. The cofactor is Mg(2+). Post-translationally, specific enzymatic cleavages in vivo by its own proteases yield mature proteins. 3CL-PRO and PL-PRO proteinases are autocatalytically processed.

The protein resides in the host membrane. The protein localises to the host cytoplasm. It localises to the host perinuclear region. Its subcellular location is the host endoplasmic reticulum-Golgi intermediate compartment. The catalysed reaction is RNA(n) + a ribonucleoside 5'-triphosphate = RNA(n+1) + diphosphate. The enzyme catalyses ATP + H2O = ADP + phosphate + H(+). It carries out the reaction Thiol-dependent hydrolysis of ester, thioester, amide, peptide and isopeptide bonds formed by the C-terminal Gly of ubiquitin (a 76-residue protein attached to proteins as an intracellular targeting signal).. It catalyses the reaction a 5'-end (N(7)-methyl 5'-triphosphoguanosine)-ribonucleoside in mRNA + S-adenosyl-L-methionine = a 5'-end (N(7)-methyl 5'-triphosphoguanosine)-(2'-O-methyl-ribonucleoside) in mRNA + S-adenosyl-L-homocysteine + H(+). The catalysed reaction is uridylyl-uridylyl-ribonucleotide-RNA = a 3'-end uridylyl-2',3'-cyclophospho-uridine-RNA + a 5'-end dephospho-ribonucleoside-RNA. The enzyme catalyses a 5'-end diphospho-ribonucleoside in mRNA + GTP + H(+) = a 5'-end (5'-triphosphoguanosine)-ribonucleoside in mRNA + diphosphate. It carries out the reaction a 5'-end (5'-triphosphoguanosine)-ribonucleoside in mRNA + S-adenosyl-L-methionine = a 5'-end (N(7)-methyl 5'-triphosphoguanosine)-ribonucleoside in mRNA + S-adenosyl-L-homocysteine. The replicase polyprotein of coronaviruses is a multifunctional protein: it contains the activities necessary for the transcription of negative stranded RNA, leader RNA, subgenomic mRNAs and progeny virion RNA as well as proteinases responsible for the cleavage of the polyprotein into functional products. Functionally, inhibits host translation by interacting with the 40S ribosomal subunit. The nsp1-40S ribosome complex further induces an endonucleolytic cleavage near the 5'UTR of host mRNAs, targeting them for degradation. Viral mRNAs are not susceptible to nsp1-mediated endonucleolytic RNA cleavage thanks to the presence of a 5'-end leader sequence and are therefore protected from degradation. By suppressing host gene expression, nsp1 facilitates efficient viral gene expression in infected cells and evasion from host immune response. In terms of biological role, may play a role in the modulation of host cell survival signaling pathway by interacting with host PHB and PHB2. Indeed, these two proteins play a role in maintaining the functional integrity of the mitochondria and protecting cells from various stresses. Its function is as follows. Responsible for the cleavages located at the N-terminus of the replicase polyprotein. In addition, PL-PRO possesses a deubiquitinating/deISGylating activity and processes both 'Lys-48'- and 'Lys-63'-linked polyubiquitin chains from cellular substrates. Participates together with nsp4 in the assembly of virally-induced cytoplasmic double-membrane vesicles necessary for viral replication. Antagonizes innate immune induction of type I interferon by blocking the phosphorylation, dimerization and subsequent nuclear translocation of host IRF3. Also prevents host NF-kappa-B signaling. Participates in the assembly of virally-induced cytoplasmic double-membrane vesicles necessary for viral replication. Functionally, cleaves the C-terminus of replicase polyprotein at 11 sites. Recognizes substrates containing the core sequence [ILMVF]-Q-|-[SGACN]. Also able to bind an ADP-ribose-1''-phosphate (ADRP). In terms of biological role, plays a role in the initial induction of autophagosomes from host endoplasmic reticulum. Later, limits the expansion of these phagosomes that are no longer able to deliver viral components to lysosomes. Its function is as follows. Forms a hexadecamer with nsp8 (8 subunits of each) that may participate in viral replication by acting as a primase. Alternatively, may synthesize substantially longer products than oligonucleotide primers. Forms a hexadecamer with nsp7 (8 subunits of each) that may participate in viral replication by acting as a primase. Alternatively, may synthesize substantially longer products than oligonucleotide primers. Functionally, forms a primer, NSP9-pU, which is utilized by the polymerase for the initiation of RNA chains. Interacts with ribosome signal recognition particle RNA (SRP). Together with NSP8, suppress protein integration into the cell membrane, thereby disrupting host immune defenses. In terms of biological role, plays a pivotal role in viral transcription by stimulating both nsp14 3'-5' exoribonuclease and nsp16 2'-O-methyltransferase activities. Therefore plays an essential role in viral mRNAs cap methylation. Its function is as follows. RNA-directed RNA polymerase that catalyzes the transcription of viral genomic and subgenomic RNAs. Acts in complex with nsp7 and nsp8 to transcribe both the minus and positive strands of genomic RNA. The kinase-like NiRAN domain of NSP12 attaches one or more nucleotides to the amino terminus of NSP9, forming a covalent RNA-protein intermediate that serves as transcription/replication primer. Subgenomic RNAs (sgRNAs) are formed by discontinuous transcription: The polymerase has the ability to pause at transcription-regulating sequences (TRS) and jump to the leader TRS, resulting in a major deletion. This creates a series of subgenomic RNAs that are replicated, transcribed and translated. In addition, Nsp12 is a subunit of the viral RNA capping enzyme that catalyzes the RNA guanylyltransferase reaction for genomic and sub-genomic RNAs. Subsequently, the NiRAN domain transfers RNA to GDP, and forms the core cap structure GpppA-RNA. Multi-functional protein with a zinc-binding domain in N-terminus displaying RNA and DNA duplex-unwinding activities with 5' to 3' polarity. Activity of helicase is dependent on magnesium. Functionally, plays a role in viral RNA synthesis through two distinct activities. The N7-guanine methyltransferase activity plays a role in the formation of the cap structure GpppA-RNA. The proofreading exoribonuclease reduces the sensitivity of the virus to RNA mutagens during replication. This activity acts on both ssRNA and dsRNA in a 3'-5' direction. In terms of biological role, plays a role in viral transcription/replication and prevents the simultaneous activation of host cell dsRNA sensors, such as MDA5/IFIH1, OAS, and PKR. Acts by degrading the 5'-polyuridines generated during replication of the poly(A) region of viral genomic and subgenomic RNAs. Catalyzes a two-step reaction in which a 2'3'-cyclic phosphate (2'3'-cP) is first generated by 2'-O transesterification, which is then hydrolyzed to a 3'-phosphate (3'-P). If not degraded, poly(U) RNA would hybridize with poly(A) RNA tails and activate host dsRNA sensors. Its function is as follows. Methyltransferase that mediates mRNA cap 2'-O-ribose methylation to the 5'-cap structure of viral mRNAs. N7-methyl guanosine cap is a prerequisite for binding of nsp16. Therefore plays an essential role in viral mRNAs cap methylation which is essential to evade immune system. The sequence is that of Replicase polyprotein 1ab (rep) from Bos taurus (Bovine).